Consider the following 304-residue polypeptide: Putative S-adenosyl-L-methionine-dependent methyltransferase MAV_4444 (304 aa).

S-adenosyl-L-methionine is bound by residues aspartate 130 and 159–160; that span reads DL.

It belongs to the UPF0677 family.

Exhibits S-adenosyl-L-methionine-dependent methyltransferase activity. The protein is Putative S-adenosyl-L-methionine-dependent methyltransferase MAV_4444 of Mycobacterium avium (strain 104).